Consider the following 204-residue polypeptide: Shikimate kinase (204 aa).

35-40 (ASGKST) lines the ATP pocket. S39 is a binding site for Mg(2+). Substrate is bound by residues D57, R81, and G103. R142 serves as a coordination point for ATP. R169 serves as a coordination point for substrate.

Belongs to the shikimate kinase family. In terms of assembly, monomer. It depends on Mg(2+) as a cofactor.

It localises to the cytoplasm. The catalysed reaction is shikimate + ATP = 3-phosphoshikimate + ADP + H(+). The protein operates within metabolic intermediate biosynthesis; chorismate biosynthesis; chorismate from D-erythrose 4-phosphate and phosphoenolpyruvate: step 5/7. Functionally, catalyzes the specific phosphorylation of the 3-hydroxyl group of shikimic acid using ATP as a cosubstrate. This chain is Shikimate kinase, found in Salinibacter ruber (strain DSM 13855 / M31).